We begin with the raw amino-acid sequence, 169 residues long: Allophycocyanin subunit beta-18 (169 aa).

Asn72 carries the N4-methylasparagine modification. Residue Cys82 participates in (2R,3E)-phycocyanobilin binding.

Belongs to the phycobiliprotein family. In terms of assembly, heterodimer of an alpha and a beta chain. Contains one covalently linked phycocyanobilin chromophore.

Its subcellular location is the plastid. The protein localises to the cyanelle thylakoid membrane. In terms of biological role, light-harvesting photosynthetic bile pigment-protein from the phycobiliprotein complex. Allophycocyanin has a maximum absorption at approximately 650 nanometers. The polypeptide is Allophycocyanin subunit beta-18 (apcF) (Cyanophora paradoxa).